Here is a 126-residue protein sequence, read N- to C-terminus: Large ribosomal subunit protein bL12 (126 aa).

The protein belongs to the bacterial ribosomal protein bL12 family. Homodimer. Part of the ribosomal stalk of the 50S ribosomal subunit. Forms a multimeric L10(L12)X complex, where L10 forms an elongated spine to which 2 to 4 L12 dimers bind in a sequential fashion. Binds GTP-bound translation factors.

Forms part of the ribosomal stalk which helps the ribosome interact with GTP-bound translation factors. Is thus essential for accurate translation. The sequence is that of Large ribosomal subunit protein bL12 from Nitrosospira multiformis (strain ATCC 25196 / NCIMB 11849 / C 71).